A 492-amino-acid chain; its full sequence is E1B 55 kDa protein (492 aa).

Positions 22-112 are disordered; that stretch reads ENMEGSQDED…ERNPSGNNSR (91 aa). A compositionally biased stretch (low complexity) spans 34–44; the sequence is RLLASAASGSS. A phosphoserine mark is found at serine 486 and serine 487. At threonine 491 the chain carries Phosphothreonine.

This sequence belongs to the adenoviridae E1B 55 kDa protein family. In terms of assembly, interacts with host PML-4 and PML-5; this interaction promotes efficient subnuclear targeting of E1B-55K to PML nuclear bodies. Interacts with E4-ORF3 protein. Interacts with E4-ORF6 protein.

Its subcellular location is the host nucleus. The protein resides in the host cytoplasm. Plays a major role to prevent cellular inhibition of viral genome replication. Assembles an SCF-like E3 ubiquitin ligase complex based on the cellular proteins ELOB, ELOC, CUL5 and RBX1, in cooperation with viral E4orf6. This viral RING-type ligase ubiquitinates cellular substrates and targets them to proteasomal degradation: TP53/p53, LIG4, MRE11-RAD50-NBS1 (MRN) complex, ITGA3, DAXX and BLM. E1B-55K probably acts as the substrate-specific adapter of the SCF-like E3 ubiquitin ligase complex. Degradation of host TP53/p53 activity is essential for preventing E1A-induced TP53 accumulation that would otherwise lead to cell apoptosis and growth arrest. E1B-55K also inactivates TP53 transcription-factor activity by binding its transactivation domain. E1B-55K also functions as a SUMO1 E3 ligase for TP53 which causes the latter to be sequestered in promyelocytic leukemia (PML) nuclear bodies thereby contributing to maximal inhibition of TP53 function. The chain is E1B 55 kDa protein from Human adenovirus B serotype 7 (HAdV-7).